The primary structure comprises 391 residues: 2-deoxy-scyllo-inosose synthase (391 aa).

NAD(+)-binding positions include aspartate 42, 73–76 (EVHK), 105–109 (GVTGN), 129–130 (TT), 140–142 (SLK), and 151–152 (KN). Residue lysine 142 is part of the active site. Residue glutamate 184 coordinates Co(2+). Glutamate 244 is an active-site residue. Histidine 247 and histidine 263 together coordinate Co(2+).

It belongs to the sugar phosphate cyclases superfamily. DOI synthase family. Requires NAD(+) as cofactor. Co(2+) serves as cofactor.

It carries out the reaction D-glucose 6-phosphate = 2-deoxy-L-scyllo-inosose + phosphate. It participates in metabolic intermediate biosynthesis; 2-deoxystreptamine biosynthesis; 2-deoxystreptamine from D-glucose 6-phosphate: step 1/4. The protein operates within antibiotic biosynthesis; ribostamycin biosynthesis. Its function is as follows. Catalyzes the intramolecular carbocycle formation from D-glucose-6-phosphate to 2-deoxy-scyllo-inosose (DOI). The polypeptide is 2-deoxy-scyllo-inosose synthase (rbmA) (Streptomyces ribosidificus).